We begin with the raw amino-acid sequence, 129 residues long: Small ribosomal subunit protein uS11 (129 aa).

The protein belongs to the universal ribosomal protein uS11 family. Part of the 30S ribosomal subunit. Interacts with proteins S7 and S18. Binds to IF-3.

In terms of biological role, located on the platform of the 30S subunit, it bridges several disparate RNA helices of the 16S rRNA. Forms part of the Shine-Dalgarno cleft in the 70S ribosome. The chain is Small ribosomal subunit protein uS11 from Aromatoleum aromaticum (strain DSM 19018 / LMG 30748 / EbN1) (Azoarcus sp. (strain EbN1)).